A 215-amino-acid polypeptide reads, in one-letter code: Chloramphenicol acetyltransferase (215 aa).

The active-site Proton acceptor is H189.

It belongs to the chloramphenicol acetyltransferase family. Homotrimer.

The enzyme catalyses chloramphenicol + acetyl-CoA = chloramphenicol 3-acetate + CoA. In terms of biological role, this enzyme is an effector of chloramphenicol resistance in bacteria. This Staphylococcus intermedius protein is Chloramphenicol acetyltransferase (cat).